We begin with the raw amino-acid sequence, 448 residues long: NADP-specific glutamate dehydrogenase (448 aa).

Lys-88, Gln-109, and Lys-112 together coordinate substrate. Residue Lys-124 is the Proton donor of the active site. A substrate-binding site is contributed by Gly-163. Residues Thr-207 and Asn-238 each contribute to the NADP(+) site. Ser-381 is a binding site for substrate.

Belongs to the Glu/Leu/Phe/Val dehydrogenases family. Homohexamer.

It catalyses the reaction L-glutamate + NADP(+) + H2O = 2-oxoglutarate + NH4(+) + NADPH + H(+). Its function is as follows. Catalyzes the reversible oxidative deamination of glutamate to alpha-ketoglutarate and ammonia. This chain is NADP-specific glutamate dehydrogenase (gdhA), found in Helicobacter pylori (strain J99 / ATCC 700824) (Campylobacter pylori J99).